Consider the following 357-residue polypeptide: Phosphoribosylformylglycinamidine cyclo-ligase (357 aa).

This sequence belongs to the AIR synthase family.

Its subcellular location is the cytoplasm. It carries out the reaction 2-formamido-N(1)-(5-O-phospho-beta-D-ribosyl)acetamidine + ATP = 5-amino-1-(5-phospho-beta-D-ribosyl)imidazole + ADP + phosphate + H(+). It functions in the pathway purine metabolism; IMP biosynthesis via de novo pathway; 5-amino-1-(5-phospho-D-ribosyl)imidazole from N(2)-formyl-N(1)-(5-phospho-D-ribosyl)glycinamide: step 2/2. The polypeptide is Phosphoribosylformylglycinamidine cyclo-ligase (Rhizobium rhizogenes (strain K84 / ATCC BAA-868) (Agrobacterium radiobacter)).